We begin with the raw amino-acid sequence, 195 residues long: Large ribosomal subunit protein uL18 (195 aa).

This sequence belongs to the universal ribosomal protein uL18 family. As to quaternary structure, part of the 50S ribosomal subunit. Contacts the 5S and 23S rRNAs.

In terms of biological role, this is one of the proteins that bind and probably mediate the attachment of the 5S RNA into the large ribosomal subunit, where it forms part of the central protuberance. The polypeptide is Large ribosomal subunit protein uL18 (Korarchaeum cryptofilum (strain OPF8)).